Consider the following 184-residue polypeptide: Ribosome-recycling factor (184 aa).

This sequence belongs to the RRF family.

It localises to the cytoplasm. Responsible for the release of ribosomes from messenger RNA at the termination of protein biosynthesis. May increase the efficiency of translation by recycling ribosomes from one round of translation to another. This chain is Ribosome-recycling factor, found in Leptospira interrogans serogroup Icterohaemorrhagiae serovar copenhageni (strain Fiocruz L1-130).